A 111-amino-acid chain; its full sequence is Probable 4-amino-4-deoxy-L-arabinose-phosphoundecaprenol flippase subunit ArnE (111 aa).

Transmembrane regions (helical) follow at residues 38–58 (LWLGLALICMGAAMVLWLLVL), 61–81 (LPVGIAYPMLSLNFVWVTLAA), and 91–111 (PRHWFGVALIISGIIILGSAA). The EamA domain maps to 40–109 (LGLALICMGA…IISGIIILGS (70 aa)).

This sequence belongs to the ArnE family. In terms of assembly, heterodimer of ArnE and ArnF.

It localises to the cell inner membrane. It participates in bacterial outer membrane biogenesis; lipopolysaccharide biosynthesis. Its function is as follows. Translocates 4-amino-4-deoxy-L-arabinose-phosphoundecaprenol (alpha-L-Ara4N-phosphoundecaprenol) from the cytoplasmic to the periplasmic side of the inner membrane. The sequence is that of Probable 4-amino-4-deoxy-L-arabinose-phosphoundecaprenol flippase subunit ArnE from Salmonella enteritidis PT4 (strain P125109).